The sequence spans 121 residues: Large ribosomal subunit protein uL18 (121 aa).

Belongs to the universal ribosomal protein uL18 family. Part of the 50S ribosomal subunit; part of the 5S rRNA/L5/L18/L25 subcomplex. Contacts the 5S and 23S rRNAs.

Its function is as follows. This is one of the proteins that bind and probably mediate the attachment of the 5S RNA into the large ribosomal subunit, where it forms part of the central protuberance. The chain is Large ribosomal subunit protein uL18 from Burkholderia multivorans (strain ATCC 17616 / 249).